The following is an 85-amino-acid chain: N.vectensis toxin 1 6 (85 aa).

Residues 1–20 (MASFKIVIVCLALLVAVACA) form the signal peptide. Positions 21–36 (RRRDMMSDDELDYHYS) are excised as a propeptide. 3 disulfide bridges follow: C42–C82, C44–C72, and C65–C83.

This sequence belongs to the sea anemone sodium channel inhibitory toxin family. Type II subfamily. Expressed in ectodermal glands and in clumps outside of the extodermal layer. Is not expressed in nematocytes. In adult female tissues, shows similar expression levels in mesenteries (gametes-producing tissue), tentacles, pharynx and physa.

The protein resides in the secreted. In terms of biological role, binds to site 3 of voltage-gated sodium channels and inhibits the inactivation process. Is highly active on DmNav1/TipE (drosophila) and is only extremely weakly active on rat Nav1.4-beta-1/SCN4A-SCN1B, and on human Nav1.5-beta-1/SCN5A-beta-1. This reveals high specificity for arthropod over mammalian channels. In vivo, when released into the medium, this recombinant toxin induces impaired swimming, paralysis and death of the crustacean A.nauplii within several hours. Also causes paralysis of cherry shrimps immediately after injection at very low doses. Its effect on zebrafish (D.rerio) larvae is also rapid, since it induces tail twitching accompanied by impaired swimming after 20 minutes and complete paralysis within 45 minutes. It has also been observed to cause death of zebrafish larvae within 1 hour. This chain is N.vectensis toxin 1 6, found in Nematostella vectensis (Starlet sea anemone).